The following is a 117-amino-acid chain: Multidrug resistance protein EbrB (117 aa).

4 helical membrane passes run 3–23 (GLLY…MLKL), 31–51 (WPIG…SFSL), 59–79 (AYAT…FLLF), and 81–101 (ETIS…VVVL).

It belongs to the drug/metabolite transporter (DMT) superfamily. Small multidrug resistance (SMR) (TC 2.A.7.1) family. EbrA/EbrB subfamily. In terms of assembly, the efflux pump is composed of EbrA and EbrB.

It is found in the cell membrane. Functionally, part of a multidrug efflux pump. Confers resistance to cationic lipophilic dyes such as ethidium bromide, acriflavine, pyronine Y and safranin O. The efflux is probably coupled to an influx of protons. This chain is Multidrug resistance protein EbrB (ebrB), found in Bacillus atrophaeus.